A 212-amino-acid polypeptide reads, in one-letter code: Adenylate kinase (212 aa).

Residue 10 to 15 participates in ATP binding; the sequence is GAGKGT. The tract at residues 30–59 is NMP; the sequence is STGDILREAMAQETELGQKAKSYIDAGELV. Residues Thr-31, Arg-36, 57–59, 84–87, and Gln-91 contribute to the AMP site; these read ELV and GYPR. An LID region spans residues 125–158; the sequence is RRRVHEETGETYHLDHDPPPEDVDPDLIVQRSDD. ATP-binding positions include Arg-126 and 135–136; that span reads TY. AMP-binding residues include Arg-155 and Arg-166. Residue Gly-194 participates in ATP binding.

It belongs to the adenylate kinase family. As to quaternary structure, monomer.

It is found in the cytoplasm. It catalyses the reaction AMP + ATP = 2 ADP. The protein operates within purine metabolism; AMP biosynthesis via salvage pathway; AMP from ADP: step 1/1. Its function is as follows. Catalyzes the reversible transfer of the terminal phosphate group between ATP and AMP. Plays an important role in cellular energy homeostasis and in adenine nucleotide metabolism. The sequence is that of Adenylate kinase from Salinibacter ruber (strain DSM 13855 / M31).